The primary structure comprises 343 residues: uncharacterized protein (343 aa).

Disordered stretches follow at residues 1–25 (MSSK…LSGT), 62–119 (KNIR…DCSD), and 169–188 (NPKI…TKKS). Residues 62–71 (KNIRQFKKSQ) show a composition bias toward basic residues. A compositionally biased stretch (basic and acidic residues) spans 72–81 (NKTDTEKSGE). The segment covering 83 to 107 (NDSDYSDYSDNSDDVDDLDDVDDLN) has biased composition (acidic residues).

This is an uncharacterized protein from Acanthamoeba polyphaga (Amoeba).